We begin with the raw amino-acid sequence, 235 residues long: 1-(5-phosphoribosyl)-5-[(5-phosphoribosylamino)methylideneamino] imidazole-4-carboxamide isomerase (235 aa).

Residue D8 is the Proton acceptor of the active site. D127 serves as the catalytic Proton donor.

It belongs to the HisA/HisF family.

The protein resides in the cytoplasm. It catalyses the reaction 1-(5-phospho-beta-D-ribosyl)-5-[(5-phospho-beta-D-ribosylamino)methylideneamino]imidazole-4-carboxamide = 5-[(5-phospho-1-deoxy-D-ribulos-1-ylimino)methylamino]-1-(5-phospho-beta-D-ribosyl)imidazole-4-carboxamide. It participates in amino-acid biosynthesis; L-histidine biosynthesis; L-histidine from 5-phospho-alpha-D-ribose 1-diphosphate: step 4/9. This Nautilia profundicola (strain ATCC BAA-1463 / DSM 18972 / AmH) protein is 1-(5-phosphoribosyl)-5-[(5-phosphoribosylamino)methylideneamino] imidazole-4-carboxamide isomerase.